The chain runs to 156 residues: 6,7-dimethyl-8-ribityllumazine synthase (156 aa).

5-amino-6-(D-ribitylamino)uracil contacts are provided by residues Phe25, Ala59 to Glu61, and Ala83 to Ile85. A (2S)-2-hydroxy-3-oxobutyl phosphate-binding site is contributed by Ser88–Thr89. Catalysis depends on His91, which acts as the Proton donor. Residue Asn116 participates in 5-amino-6-(D-ribitylamino)uracil binding. Arg130 serves as a coordination point for (2S)-2-hydroxy-3-oxobutyl phosphate.

Belongs to the DMRL synthase family. In terms of assembly, forms an icosahedral capsid composed of 60 subunits, arranged as a dodecamer of pentamers.

The catalysed reaction is (2S)-2-hydroxy-3-oxobutyl phosphate + 5-amino-6-(D-ribitylamino)uracil = 6,7-dimethyl-8-(1-D-ribityl)lumazine + phosphate + 2 H2O + H(+). The protein operates within cofactor biosynthesis; riboflavin biosynthesis; riboflavin from 2-hydroxy-3-oxobutyl phosphate and 5-amino-6-(D-ribitylamino)uracil: step 1/2. Functionally, catalyzes the formation of 6,7-dimethyl-8-ribityllumazine by condensation of 5-amino-6-(D-ribitylamino)uracil with 3,4-dihydroxy-2-butanone 4-phosphate. This is the penultimate step in the biosynthesis of riboflavin. This Acinetobacter baumannii (strain AB0057) protein is 6,7-dimethyl-8-ribityllumazine synthase.